The chain runs to 894 residues: DNA mismatch repair protein MutS (894 aa).

629–636 provides a ligand contact to ATP; that stretch reads GPNMGGKS. Residues 819 to 840 form a disordered region; it reads TPTPQLDLFAPPPHPDTSDDDE.

Belongs to the DNA mismatch repair MutS family.

Its function is as follows. This protein is involved in the repair of mismatches in DNA. It is possible that it carries out the mismatch recognition step. This protein has a weak ATPase activity. The polypeptide is DNA mismatch repair protein MutS (Cupriavidus pinatubonensis (strain JMP 134 / LMG 1197) (Cupriavidus necator (strain JMP 134))).